The following is a 158-amino-acid chain: MVPKLFTSQICLLLLLGLSSLEVSLHAKPQQFSWAQWFRIQHIQTTPLHCTYAMRAINRYQPRCKNRNTFLHTTFADVVNVCGNTNMTCPGNASLNNCHHSGVRVPLTYCNLTGPQTISNCVYSSTQANMFYVVACDNRDPRDPPQYPVVPVHLDTII.

Residues 1 to 27 form the signal peptide; sequence MVPKLFTSQICLLLLLGLSSLEVSLHA. Residue Trp-34 is glycosylated (C-linked (Man) tryptophan). Residue His-42 is the Proton acceptor of the active site. Tyr-60 is subject to 3'-nitrotyrosine. 65-69 contributes to the substrate binding site; sequence KNRNT. N-linked (GlcNAc...) asparagine glycosylation is found at Asn-86, Asn-92, and Asn-111. His-153 (proton donor) is an active-site residue.

This sequence belongs to the pancreatic ribonuclease family. In terms of assembly, interacts with and forms a tight 1:1 complex with RNH1. Dimerization of two such complexes may occur.

It localises to the lysosome. The protein resides in the cytoplasmic granule. The enzyme catalyses an [RNA] containing cytidine + H2O = an [RNA]-3'-cytidine-3'-phosphate + a 5'-hydroxy-ribonucleotide-3'-[RNA].. It catalyses the reaction an [RNA] containing uridine + H2O = an [RNA]-3'-uridine-3'-phosphate + a 5'-hydroxy-ribonucleotide-3'-[RNA].. This is a non-secretory ribonuclease. It is a pyrimidine specific nuclease with a slight preference for U. Cytotoxin and helminthotoxin. Possesses a wide variety of biological activities. The sequence is that of Non-secretory ribonuclease (RNASE2) from Saguinus labiatus (Red-chested mustached tamarin).